The chain runs to 89 residues: Small ribosomal subunit protein uS14A (89 aa).

Belongs to the universal ribosomal protein uS14 family. In terms of assembly, part of the 30S ribosomal subunit. Contacts proteins S3 and S10.

In terms of biological role, binds 16S rRNA, required for the assembly of 30S particles and may also be responsible for determining the conformation of the 16S rRNA at the A site. The protein is Small ribosomal subunit protein uS14A of Levilactobacillus brevis (strain ATCC 367 / BCRC 12310 / CIP 105137 / JCM 1170 / LMG 11437 / NCIMB 947 / NCTC 947) (Lactobacillus brevis).